A 363-amino-acid chain; its full sequence is Melanoma-associated antigen B16 (363 aa).

The tract at residues Glu33–Pro124 is disordered. Over residues Ala82–Glu97 the composition is skewed to low complexity. Residues Val128–Ala327 enclose the MAGE domain. The disordered stretch occupies residues His342–Val363.

The chain is Melanoma-associated antigen B16 (Mageb16) from Mus musculus (Mouse).